A 438-amino-acid polypeptide reads, in one-letter code: Putative hydrolase MSMEG_3995/MSMEI_3903 (438 aa).

Zn(2+) is bound by residues Asp-95, Asp-104, Glu-143, and His-208. Lys-217 is covalently cross-linked (Isoglutamyl lysine isopeptide (Lys-Gln) (interchain with Q-Cter in protein Pup)). His-400 provides a ligand contact to Zn(2+).

It belongs to the peptidase M20 family. It depends on Zn(2+) as a cofactor.

The polypeptide is Putative hydrolase MSMEG_3995/MSMEI_3903 (Mycolicibacterium smegmatis (strain ATCC 700084 / mc(2)155) (Mycobacterium smegmatis)).